Consider the following 490-residue polypeptide: Aspartyl/glutamyl-tRNA(Asn/Gln) amidotransferase subunit B (490 aa).

Belongs to the GatB/GatE family. GatB subfamily. Heterotrimer of A, B and C subunits.

It carries out the reaction L-glutamyl-tRNA(Gln) + L-glutamine + ATP + H2O = L-glutaminyl-tRNA(Gln) + L-glutamate + ADP + phosphate + H(+). It catalyses the reaction L-aspartyl-tRNA(Asn) + L-glutamine + ATP + H2O = L-asparaginyl-tRNA(Asn) + L-glutamate + ADP + phosphate + 2 H(+). Its function is as follows. Allows the formation of correctly charged Asn-tRNA(Asn) or Gln-tRNA(Gln) through the transamidation of misacylated Asp-tRNA(Asn) or Glu-tRNA(Gln) in organisms which lack either or both of asparaginyl-tRNA or glutaminyl-tRNA synthetases. The reaction takes place in the presence of glutamine and ATP through an activated phospho-Asp-tRNA(Asn) or phospho-Glu-tRNA(Gln). The sequence is that of Aspartyl/glutamyl-tRNA(Asn/Gln) amidotransferase subunit B from Methylobacterium sp. (strain 4-46).